Here is a 60-residue protein sequence, read N- to C-terminus: Cytotoxin 1 (60 aa).

Cystine bridges form between C3–C21, C14–C38, C42–C53, and C54–C59.

Belongs to the three-finger toxin family. Short-chain subfamily. Type IA cytotoxin sub-subfamily. In terms of assembly, monomer in solution; Homodimer and oligomer in the presence of negatively charged lipids forming a pore with a size ranging between 20 and 30 Angstroms. Expressed by the venom gland.

It is found in the secreted. Its subcellular location is the target cell membrane. Shows cytolytic activity on many different cells by forming pore in lipid membranes. In vivo, increases heart rate or kills the animal by cardiac arrest. In addition, it binds to heparin with high affinity, interacts with Kv channel-interacting protein 1 (KCNIP1) in a calcium-independent manner, and binds to integrin alpha-V/beta-3 (ITGAV/ITGB3) with moderate affinity. The sequence is that of Cytotoxin 1 from Naja naja (Indian cobra).